The primary structure comprises 322 residues: Lipoyl synthase 2 (322 aa).

Residues 1 to 36 are disordered; that stretch reads MKVILDLLNNDPRTTQRTERPRHPEKANRPDTPMES. Positions 14–34 are enriched in basic and acidic residues; it reads TTQRTERPRHPEKANRPDTPM. Positions 67, 72, 78, 93, 97, 100, and 306 each coordinate [4Fe-4S] cluster. The 217-residue stretch at 79–295 folds into the Radical SAM core domain; that stretch reads WAKKHATFMI…EKTAYAKGFL (217 aa).

The protein belongs to the radical SAM superfamily. Lipoyl synthase family. [4Fe-4S] cluster is required as a cofactor.

The protein resides in the cytoplasm. It carries out the reaction [[Fe-S] cluster scaffold protein carrying a second [4Fe-4S](2+) cluster] + N(6)-octanoyl-L-lysyl-[protein] + 2 oxidized [2Fe-2S]-[ferredoxin] + 2 S-adenosyl-L-methionine + 4 H(+) = [[Fe-S] cluster scaffold protein] + N(6)-[(R)-dihydrolipoyl]-L-lysyl-[protein] + 4 Fe(3+) + 2 hydrogen sulfide + 2 5'-deoxyadenosine + 2 L-methionine + 2 reduced [2Fe-2S]-[ferredoxin]. It functions in the pathway protein modification; protein lipoylation via endogenous pathway; protein N(6)-(lipoyl)lysine from octanoyl-[acyl-carrier-protein]: step 2/2. Its function is as follows. Catalyzes the radical-mediated insertion of two sulfur atoms into the C-6 and C-8 positions of the octanoyl moiety bound to the lipoyl domains of lipoate-dependent enzymes, thereby converting the octanoylated domains into lipoylated derivatives. The protein is Lipoyl synthase 2 of Bradyrhizobium diazoefficiens (strain JCM 10833 / BCRC 13528 / IAM 13628 / NBRC 14792 / USDA 110).